Reading from the N-terminus, the 121-residue chain is Large ribosomal subunit protein eL8 (121 aa).

The protein belongs to the eukaryotic ribosomal protein eL8 family. As to quaternary structure, part of the 50S ribosomal subunit. Probably part of the RNase P complex.

The protein resides in the cytoplasm. Functionally, multifunctional RNA-binding protein that recognizes the K-turn motif in ribosomal RNA, the RNA component of RNase P, box H/ACA, box C/D and box C'/D' sRNAs. This Thermoplasma acidophilum (strain ATCC 25905 / DSM 1728 / JCM 9062 / NBRC 15155 / AMRC-C165) protein is Large ribosomal subunit protein eL8.